We begin with the raw amino-acid sequence, 275 residues long: Membrane protein insertase YidC (275 aa).

Residues 1–22 (MKKYKRLLLMAGLVTLVFVLSA) form the signal peptide. Cys23 carries the N-palmitoyl cysteine lipid modification. Cys23 carries S-diacylglycerol cysteine lipidation. Transmembrane regions (helical) follow at residues 53–73 (LGGS…IILL), 127–147 (YIGC…YQAI), 169–189 (YLIL…LSSM), and 206–226 (PAMI…YWVV). Residues 249–266 (EEAARQAKARERALERAK) show a composition bias toward basic and acidic residues. The disordered stretch occupies residues 249–275 (EEAARQAKARERALERAKSPKKKGKKK).

This sequence belongs to the OXA1/ALB3/YidC family. Type 2 subfamily.

It is found in the cell membrane. In terms of biological role, required for the insertion and/or proper folding and/or complex formation of integral membrane proteins into the membrane. Involved in integration of membrane proteins that insert both dependently and independently of the Sec translocase complex, as well as at least some lipoproteins. The sequence is that of Membrane protein insertase YidC from Enterococcus faecalis (strain ATCC 700802 / V583).